The primary structure comprises 236 residues: MTADSTEIPQLALPLSQSPAAGKRARRILCGVDEAGRGPLAGPVTAAAVVLNPRKPIQGLADSKVLTAKKREALYDEIVEKALAWHVAEATVEEIDRINILHATMLAMQRAVQGVAAQGVLPDLVQVDGNRCPQVAFAVEAIVKGDALVPAISAASILAKVTRDRQLAALHIAFPQYGFDVHAGYGTPQHLAAIERHGVTPHHRRSFAPVRRALDGAPPPAGDAVPQTDAKTAWAD.

Residues 27-219 form the RNase H type-2 domain; sequence RILCGVDEAG…VRRALDGAPP (193 aa). Residues aspartate 33, glutamate 34, and aspartate 128 each contribute to the a divalent metal cation site. The tract at residues 212-236 is disordered; the sequence is RALDGAPPPAGDAVPQTDAKTAWAD.

The protein belongs to the RNase HII family. Requires Mn(2+) as cofactor. The cofactor is Mg(2+).

The protein resides in the cytoplasm. It carries out the reaction Endonucleolytic cleavage to 5'-phosphomonoester.. Its function is as follows. Endonuclease that specifically degrades the RNA of RNA-DNA hybrids. The sequence is that of Ribonuclease HII from Ralstonia nicotianae (strain ATCC BAA-1114 / GMI1000) (Ralstonia solanacearum).